The following is a 119-amino-acid chain: Ribonuclease P protein component (119 aa).

Belongs to the RnpA family. In terms of assembly, consists of a catalytic RNA component (M1 or rnpB) and a protein subunit.

It carries out the reaction Endonucleolytic cleavage of RNA, removing 5'-extranucleotides from tRNA precursor.. Its function is as follows. RNaseP catalyzes the removal of the 5'-leader sequence from pre-tRNA to produce the mature 5'-terminus. It can also cleave other RNA substrates such as 4.5S RNA. The protein component plays an auxiliary but essential role in vivo by binding to the 5'-leader sequence and broadening the substrate specificity of the ribozyme. This Proteus mirabilis (strain HI4320) protein is Ribonuclease P protein component.